The chain runs to 301 residues: MGRTRKGRAISGWLVVDKPAGMTSTAVVNKVRWALGAQKAGHAGTLDPDATGVLAVALGEATKTVPYITDALKCYRFMVRLGVGTRTDDASGEVIATSEARPEDPEIEAALAAFRGEIMQVPPQFSAVKVEGERAYDLAREGERLDLAARPLWVESLELISRPDADHVELEMVCGKGGYVRSIARDLGQALGCHGHVEWLRRTWSGPFEAEDGISVATIDELAKSEELLAHVMPLACGLADLPELPATAEGAARLKCGNPGMVIASDVEFGEEAWASFQGQPVAVGIYKAGELHPTRVFNL.

The active-site Nucleophile is the D47.

The protein belongs to the pseudouridine synthase TruB family. Type 1 subfamily.

The catalysed reaction is uridine(55) in tRNA = pseudouridine(55) in tRNA. In terms of biological role, responsible for synthesis of pseudouridine from uracil-55 in the psi GC loop of transfer RNAs. The chain is tRNA pseudouridine synthase B from Cereibacter sphaeroides (strain ATCC 17025 / ATH 2.4.3) (Rhodobacter sphaeroides).